Consider the following 185-residue polypeptide: Crossover junction endodeoxyribonuclease RuvC (185 aa).

Residues Asp-16, Glu-75, and Asp-147 contribute to the active site. The Mg(2+) site is built by Asp-16, Glu-75, and Asp-147.

This sequence belongs to the RuvC family. As to quaternary structure, homodimer which binds Holliday junction (HJ) DNA. The HJ becomes 2-fold symmetrical on binding to RuvC with unstacked arms; it has a different conformation from HJ DNA in complex with RuvA. In the full resolvosome a probable DNA-RuvA(4)-RuvB(12)-RuvC(2) complex forms which resolves the HJ. Requires Mg(2+) as cofactor.

It localises to the cytoplasm. The enzyme catalyses Endonucleolytic cleavage at a junction such as a reciprocal single-stranded crossover between two homologous DNA duplexes (Holliday junction).. The RuvA-RuvB-RuvC complex processes Holliday junction (HJ) DNA during genetic recombination and DNA repair. Endonuclease that resolves HJ intermediates. Cleaves cruciform DNA by making single-stranded nicks across the HJ at symmetrical positions within the homologous arms, yielding a 5'-phosphate and a 3'-hydroxyl group; requires a central core of homology in the junction. The consensus cleavage sequence is 5'-(A/T)TT(C/G)-3'. Cleavage occurs on the 3'-side of the TT dinucleotide at the point of strand exchange. HJ branch migration catalyzed by RuvA-RuvB allows RuvC to scan DNA until it finds its consensus sequence, where it cleaves and resolves the cruciform DNA. The sequence is that of Crossover junction endodeoxyribonuclease RuvC from Aromatoleum aromaticum (strain DSM 19018 / LMG 30748 / EbN1) (Azoarcus sp. (strain EbN1)).